Here is a 294-residue protein sequence, read N- to C-terminus: HTH-type transcriptional regulator TcbR (294 aa).

The 58-residue stretch at 1–58 (MEFRQLKYFIAVAEAGNMAAAAKRLHVSQPPITRQMQALEADLGVVLLERSHRGIELT) folds into the HTH lysR-type domain. Positions 18–37 (MAAAAKRLHVSQPPITRQMQ) form a DNA-binding region, H-T-H motif.

It belongs to the LysR transcriptional regulatory family.

Its function is as follows. Involved in regulation of chlorinated catechol metabolism. Transcriptional activator of the tcbCDEF chlorocatechol oxidative operon. May bind 2-chloromuconate as an inducer. This Pseudomonas sp. (strain P51) protein is HTH-type transcriptional regulator TcbR (tcbR).